The chain runs to 176 residues: Interleukin-7 (176 aa).

Positions 1-25 (MFHVSFRYIFGIPPLILVLLPVASS) are cleaved as a signal peptide. 3 cysteine pairs are disulfide-bonded: cysteine 27–cysteine 165, cysteine 58–cysteine 153, and cysteine 71–cysteine 116. Residues asparagine 94, asparagine 115, and asparagine 140 are each glycosylated (N-linked (GlcNAc...) asparagine).

Belongs to the IL-7/IL-9 family.

Its subcellular location is the secreted. In terms of biological role, hematopoietic growth factor capable of stimulating the proliferation of lymphoid progenitors. It is important for proliferation during certain stages of B-cell maturation. This is Interleukin-7 (IL7) from Sus scrofa (Pig).